The sequence spans 58 residues: Pepsin-1 (58 aa).

The propeptide at Leu1–Phe41 is activation peptide.

The protein belongs to the peptidase A1 family.

In Thunnus orientalis (North Pacific bluefin tuna), this protein is Pepsin-1.